The sequence spans 283 residues: MTTSPGTVESTTPVSGQLRTVLSAGERPARATAVSATLTHLWRAMMAFKHFPVQLIDIVLMPLIFLLMFTYLFGGAFADSTEEYLQFYLPGVTVQAVVMMTVYTGTSLNTDIHKGVFDRFRTLPFWQPATLAGSLLGDVLRYVVALATTVFLGLLLGFRADGGFLGVVGAMLVLIVFGFSVSWIFAALGVVASEPERVSGTSMIVLYPLLFMSNIFVMPETMPGWMQAIVDANPMSHAATASRELMHGTAGFWDVGLVLCVSAGLVAVFAPLTMRLYRNKNAH.

One can recognise an ABC transmembrane type-2 domain in the interval 53 to 280 (VQLIDIVLMP…PLTMRLYRNK (228 aa)). 6 helical membrane passes run 58–78 (IVLM…GAFA), 85–105 (LQFY…VYTG), 150–170 (VFLG…VVGA), 171–191 (MLVL…LGVV), 198–218 (VSGT…IFVM), and 252–272 (FWDV…FAPL).

This sequence belongs to the ABC-2 integral membrane protein family. As to quaternary structure, the complex is probably composed of two ATP-binding proteins (DrrA1) and two transmembrane proteins (DrrB1).

It is found in the cell membrane. Functionally, part of the ABC transporter complex DrrA1B1 involved in daunorubicin efflux. Responsible for the translocation of the substrate across the membrane. Confers self-resistance to daunorubicin, an antibiotic produced by S.coeruleorubidus. This is Daunorubicin resistance ABC transporter permease protein DrrB1 from Streptomyces coeruleorubidus.